Consider the following 846-residue polypeptide: Probable tape measure protein (846 aa).

Residues Met-59–Lys-82 are a coiled coil.

Belongs to the P2likevirus tape measure protein family.

Its function is as follows. Serves as a base for tail tube protein polymerization and acts as a template for tail length determination. The chain is Probable tape measure protein from Burkholderia phage BcepMu (isolate -/United States/Summer/2002) (Bacteriophage BcepMu).